The primary structure comprises 624 residues: Bifunctional protein ArgH (624 aa).

Residues Met-1–Val-466 are argininosuccinate lyase. In terms of domain architecture, N-acetyltransferase spans Val-464–Gln-614. The segment at Arg-467 to Ala-624 is probable acetyltransferase.

The protein in the N-terminal section; belongs to the lyase 1 family. Argininosuccinate lyase subfamily.

The protein resides in the cytoplasm. The catalysed reaction is 2-(N(omega)-L-arginino)succinate = fumarate + L-arginine. It functions in the pathway amino-acid biosynthesis; L-arginine biosynthesis; L-arginine from L-ornithine and carbamoyl phosphate: step 3/3. This is Bifunctional protein ArgH (argH) from Aliivibrio fischeri (strain ATCC 700601 / ES114) (Vibrio fischeri).